Here is a 229-residue protein sequence, read N- to C-terminus: Enolase-phosphatase E1 (229 aa).

Residues 207–229 (RDPASHHPQVQRFDDIHPEQIPA) form a disordered region. Over residues 218 to 229 (RFDDIHPEQIPA) the composition is skewed to basic and acidic residues.

The protein belongs to the HAD-like hydrolase superfamily. MasA/MtnC family. In terms of assembly, monomer. The cofactor is Mg(2+).

It carries out the reaction 5-methylsulfanyl-2,3-dioxopentyl phosphate + H2O = 1,2-dihydroxy-5-(methylsulfanyl)pent-1-en-3-one + phosphate. The protein operates within amino-acid biosynthesis; L-methionine biosynthesis via salvage pathway; L-methionine from S-methyl-5-thio-alpha-D-ribose 1-phosphate: step 3/6. It functions in the pathway amino-acid biosynthesis; L-methionine biosynthesis via salvage pathway; L-methionine from S-methyl-5-thio-alpha-D-ribose 1-phosphate: step 4/6. Its function is as follows. Bifunctional enzyme that catalyzes the enolization of 2,3-diketo-5-methylthiopentyl-1-phosphate (DK-MTP-1-P) into the intermediate 2-hydroxy-3-keto-5-methylthiopentenyl-1-phosphate (HK-MTPenyl-1-P), which is then dephosphorylated to form the acireductone 1,2-dihydroxy-3-keto-5-methylthiopentene (DHK-MTPene). The polypeptide is Enolase-phosphatase E1 (Klebsiella pneumoniae (strain 342)).